Consider the following 387-residue polypeptide: ATP phosphoribosyltransferase regulatory subunit (387 aa).

This sequence belongs to the class-II aminoacyl-tRNA synthetase family. HisZ subfamily. In terms of assembly, heteromultimer composed of HisG and HisZ subunits.

The protein resides in the cytoplasm. It participates in amino-acid biosynthesis; L-histidine biosynthesis; L-histidine from 5-phospho-alpha-D-ribose 1-diphosphate: step 1/9. Required for the first step of histidine biosynthesis. May allow the feedback regulation of ATP phosphoribosyltransferase activity by histidine. The polypeptide is ATP phosphoribosyltransferase regulatory subunit (Methylobacillus flagellatus (strain ATCC 51484 / DSM 6875 / VKM B-1610 / KT)).